We begin with the raw amino-acid sequence, 420 residues long: L-cysteine:1D-myo-inositol 2-amino-2-deoxy-alpha-D-glucopyranoside ligase (420 aa).

Zn(2+) is bound at residue cysteine 46. Residues 46-49 (CGIT), threonine 61, and 84-86 (NVT) contribute to the L-cysteinyl-5'-AMP site. The 'HIGH' region motif lies at 48-58 (ITPYDSTHLGH). The 'ERGGDP' region signature appears at 194–199 (ERGGDP). Tryptophan 235 lines the L-cysteinyl-5'-AMP pocket. A Zn(2+)-binding site is contributed by cysteine 239. L-cysteinyl-5'-AMP is bound at residue 257–259 (GTD). Residue histidine 264 coordinates Zn(2+). Residue valine 291 participates in L-cysteinyl-5'-AMP binding. Residues 297 to 301 (KMSKS) carry the 'KMSKS' region motif.

The protein belongs to the class-I aminoacyl-tRNA synthetase family. MshC subfamily. As to quaternary structure, monomer. It depends on Zn(2+) as a cofactor.

It carries out the reaction 1D-myo-inositol 2-amino-2-deoxy-alpha-D-glucopyranoside + L-cysteine + ATP = 1D-myo-inositol 2-(L-cysteinylamino)-2-deoxy-alpha-D-glucopyranoside + AMP + diphosphate + H(+). Catalyzes the ATP-dependent condensation of GlcN-Ins and L-cysteine to form L-Cys-GlcN-Ins. In Beutenbergia cavernae (strain ATCC BAA-8 / DSM 12333 / CCUG 43141 / JCM 11478 / NBRC 16432 / NCIMB 13614 / HKI 0122), this protein is L-cysteine:1D-myo-inositol 2-amino-2-deoxy-alpha-D-glucopyranoside ligase.